The primary structure comprises 143 residues: Cytochrome c-type biogenesis protein CcmE (143 aa).

Over 1-8 (MTPVRRRK) the chain is Cytoplasmic. A helical; Signal-anchor for type II membrane protein transmembrane segment spans residues 9–29 (LFILLFALSVLSAAAALVLYA). At 30–143 (LRQNISLFYT…KSALADKVKQ (114 aa)) the chain is on the periplasmic side. The heme site is built by His-124 and Tyr-128.

It belongs to the CcmE/CycJ family.

It is found in the cell inner membrane. Functionally, heme chaperone required for the biogenesis of c-type cytochromes. Transiently binds heme delivered by CcmC and transfers the heme to apo-cytochromes in a process facilitated by CcmF and CcmH. The protein is Cytochrome c-type biogenesis protein CcmE of Legionella pneumophila.